Consider the following 99-residue polypeptide: Malonate decarboxylase acyl carrier protein (99 aa).

Ser25 is subject to O-(phosphoribosyl dephospho-coenzyme A)serine.

It belongs to the MdcC family. In terms of processing, covalently binds the prosthetic group of malonate decarboxylase.

The protein resides in the cytoplasm. Its function is as follows. Subunit of malonate decarboxylase, it is an acyl carrier protein to which acetyl and malonyl thioester residues are bound via a 2'-(5''-phosphoribosyl)-3'-dephospho-CoA prosthetic group and turn over during the catalytic mechanism. In Pseudomonas paraeruginosa (strain DSM 24068 / PA7) (Pseudomonas aeruginosa (strain PA7)), this protein is Malonate decarboxylase acyl carrier protein.